Consider the following 1273-residue polypeptide: Clustered mitochondria protein homolog (1273 aa).

The Clu domain maps to 344–599 (PANNADYSRM…NTYPLDVKFA (256 aa)). TPR repeat units lie at residues 981–1013 (SDQKWAEGSMLLNEDQNAALTLFAQAIAIKEEV), 1022–1055 (AEKYLTLSTVYSKLGLTPEAVAFCRKSCAIYERV), and 1151–1184 (ATLESRIGNLYASINDFHNAMEHISKTPRIFTRE). Disordered stretches follow at residues 1217–1242 (AEQASVNSGSRKKNVNQKADAPKAEL) and 1254–1273 (IEGGSTEKSKKKSSKKKGKK). The span at 1262 to 1273 (SKKKSSKKKGKK) shows a compositional bias: basic residues.

This sequence belongs to the CLU family. In terms of assembly, may associate with the eukaryotic translation initiation factor 3 (eIF-3) complex.

It localises to the cytoplasm. Its function is as follows. mRNA-binding protein involved in proper cytoplasmic distribution of mitochondria. The chain is Clustered mitochondria protein homolog from Vanderwaltozyma polyspora (strain ATCC 22028 / DSM 70294 / BCRC 21397 / CBS 2163 / NBRC 10782 / NRRL Y-8283 / UCD 57-17) (Kluyveromyces polysporus).